Here is a 462-residue protein sequence, read N- to C-terminus: Siroheme synthase (462 aa).

The interval 1-203 (MQYFPIFVDT…GNNSKAEQMM (203 aa)) is precorrin-2 dehydrogenase /sirohydrochlorin ferrochelatase. Residues 22–23 (EV) and 43–44 (PW) each bind NAD(+). Residue S128 is modified to Phosphoserine. The tract at residues 217–462 (GEVYLVGAGP…EKLNWFGADA (246 aa)) is uroporphyrinogen-III C-methyltransferase. P226 is a binding site for S-adenosyl-L-methionine. D249 (proton acceptor) is an active-site residue. Residue K271 is the Proton donor of the active site. Residues 302–304 (GGD), I307, 332–333 (TA), M384, and A413 contribute to the S-adenosyl-L-methionine site.

This sequence in the N-terminal section; belongs to the precorrin-2 dehydrogenase / sirohydrochlorin ferrochelatase family. It in the C-terminal section; belongs to the precorrin methyltransferase family.

The enzyme catalyses uroporphyrinogen III + 2 S-adenosyl-L-methionine = precorrin-2 + 2 S-adenosyl-L-homocysteine + H(+). The catalysed reaction is precorrin-2 + NAD(+) = sirohydrochlorin + NADH + 2 H(+). It carries out the reaction siroheme + 2 H(+) = sirohydrochlorin + Fe(2+). It participates in cofactor biosynthesis; adenosylcobalamin biosynthesis; precorrin-2 from uroporphyrinogen III: step 1/1. Its pathway is cofactor biosynthesis; adenosylcobalamin biosynthesis; sirohydrochlorin from precorrin-2: step 1/1. It functions in the pathway porphyrin-containing compound metabolism; siroheme biosynthesis; precorrin-2 from uroporphyrinogen III: step 1/1. The protein operates within porphyrin-containing compound metabolism; siroheme biosynthesis; siroheme from sirohydrochlorin: step 1/1. It participates in porphyrin-containing compound metabolism; siroheme biosynthesis; sirohydrochlorin from precorrin-2: step 1/1. In terms of biological role, multifunctional enzyme that catalyzes the SAM-dependent methylations of uroporphyrinogen III at position C-2 and C-7 to form precorrin-2 via precorrin-1. Then it catalyzes the NAD-dependent ring dehydrogenation of precorrin-2 to yield sirohydrochlorin. Finally, it catalyzes the ferrochelation of sirohydrochlorin to yield siroheme. The sequence is that of Siroheme synthase from Pseudoalteromonas atlantica (strain T6c / ATCC BAA-1087).